The primary structure comprises 564 residues: Pyruvate decarboxylase (564 aa).

The pyruvate site is built by Asp-28 and His-115. Thiamine diphosphate contacts are provided by residues Thr-390 and 413 to 415 (GSI). Asp-444 is a binding site for Mg(2+). Thiamine diphosphate contacts are provided by residues 445–446 (GS) and 471–476 (NDGYTI). 2 residues coordinate Mg(2+): Asn-471 and Gly-473. Glu-477 is a binding site for pyruvate.

This sequence belongs to the TPP enzyme family. In terms of assembly, homotetramer. The cofactor is Mg(2+). Thiamine diphosphate is required as a cofactor.

The enzyme catalyses a 2-oxocarboxylate + H(+) = an aldehyde + CO2. It catalyses the reaction pyruvate + H(+) = acetaldehyde + CO2. The sequence is that of Pyruvate decarboxylase (PDC1) from Candida glabrata (strain ATCC 2001 / BCRC 20586 / JCM 3761 / NBRC 0622 / NRRL Y-65 / CBS 138) (Yeast).